The chain runs to 129 residues: MSFPKYKPSSLRTLPETLDPAEYNISPETRRAQAERLAIRAQLKREYLLQYNDPNRRGLIENPALLRWAYARTINVYPNFRPTPKNSLMGALCGFGPLIFIYYIIKTERDRKEKLIQEGKLDRTFHLSY.

Ser2 is modified (N-acetylserine). A Phosphoserine modification is found at Ser26. The chain crosses the membrane as a helical span at residues 88–105 (LMGALCGFGPLIFIYYII).

It belongs to the complex I NDUFB4 subunit family. As to quaternary structure, complex I is composed of 45 different subunits.

It localises to the mitochondrion inner membrane. Accessory subunit of the mitochondrial membrane respiratory chain NADH dehydrogenase (Complex I), that is believed not to be involved in catalysis. Complex I functions in the transfer of electrons from NADH to the respiratory chain. The immediate electron acceptor for the enzyme is believed to be ubiquinone. This is NADH dehydrogenase [ubiquinone] 1 beta subcomplex subunit 4 (NDUFB4) from Gorilla gorilla gorilla (Western lowland gorilla).